A 282-amino-acid chain; its full sequence is Transcription repressor MYB4 (282 aa).

2 HTH myb-type domains span residues 9–61 (KAHT…INYL) and 62–116 (RPDL…RRKL). 2 consecutive DNA-binding regions (H-T-H motif) follow at residues 37–61 (WRSL…INYL) and 89–112 (WSLI…NTHI). The segment at 119–145 (RGIDPTSHRPIQESSASQDSKPTQLEP) is disordered. The span at 130–145 (QESSASQDSKPTQLEP) shows a compositional bias: polar residues.

In terms of assembly, interacts with BHLH12/MYC1 and BHLH42/TT8. Interacts with SAD2. As to expression, widely expressed at low level. Highly expressed in siliques. Weakly expressed in seedlings, young and mature leaves, cauline leaves, stems, flower buds and roots.

It is found in the nucleus. In terms of biological role, transcription repressor involved in regulation of protection against UV. Mediates transcriptional repression of CYP73A5, the gene encoding trans-cinnamate 4-monooxygenase, thereby regulating the accumulation of the UV-protectant compound sinapoylmalate. The polypeptide is Transcription repressor MYB4 (MYB4) (Arabidopsis thaliana (Mouse-ear cress)).